The following is a 332-amino-acid chain: 2,3-diketo-L-gulonate reductase (332 aa).

His-44 serves as the catalytic Proton donor. NAD(+) is bound by residues 168–174 (ITMVDMS), 224–225 (WK), and 304–306 (GHE).

This sequence belongs to the LDH2/MDH2 oxidoreductase family. DlgD subfamily. As to quaternary structure, homodimer.

It localises to the cytoplasm. It catalyses the reaction 3-dehydro-L-gulonate + NAD(+) = 2,3-dioxo-L-gulonate + NADH + H(+). The enzyme catalyses 3-dehydro-L-gulonate + NADP(+) = 2,3-dioxo-L-gulonate + NADPH + H(+). Its function is as follows. Catalyzes the reduction of 2,3-diketo-L-gulonate in the presence of NADH, to form 3-keto-L-gulonate. This chain is 2,3-diketo-L-gulonate reductase, found in Escherichia coli (strain SMS-3-5 / SECEC).